Here is a 374-residue protein sequence, read N- to C-terminus: Glutamate 5-kinase (374 aa).

Residue Lys-16 coordinates ATP. Residues Ser-56, Asp-143, and Asn-155 each coordinate substrate. Position 175 to 176 (175 to 176 (TD)) interacts with ATP. In terms of domain architecture, PUA spans 282–360 (KGCFVVDEGA…TRIEEILGYV (79 aa)).

The protein belongs to the glutamate 5-kinase family.

The protein resides in the cytoplasm. It carries out the reaction L-glutamate + ATP = L-glutamyl 5-phosphate + ADP. It functions in the pathway amino-acid biosynthesis; L-proline biosynthesis; L-glutamate 5-semialdehyde from L-glutamate: step 1/2. Its function is as follows. Catalyzes the transfer of a phosphate group to glutamate to form L-glutamate 5-phosphate. The chain is Glutamate 5-kinase from Methylococcus capsulatus (strain ATCC 33009 / NCIMB 11132 / Bath).